A 131-amino-acid polypeptide reads, in one-letter code: Fatty acid-binding protein (131 aa).

(5Z,8Z,11Z,14Z)-eicosatetraenoate is bound by residues arginine 106 and 126–128; that span reads RFY. Residues arginine 106 and 126–128 each bind (9Z)-octadecenoate; that span reads RFY.

It belongs to the calycin superfamily. Fatty-acid binding protein (FABP) family.

It is found in the cytoplasm. Its function is as follows. FABPs are thought to play a role in the intracellular transport of long-chain fatty acids and their acyl-CoA esters. The polypeptide is Fatty acid-binding protein (Tyrophagus putrescentiae (Mold mite)).